A 535-amino-acid polypeptide reads, in one-letter code: Butyrophilin-like protein 9 (535 aa).

A signal peptide spans 1 to 34; the sequence is MVDLSVSPDSLKPVSLTSSLVFLMHLLLLQPGEP. The Extracellular segment spans residues 35–256; that stretch reads SSEVKVLGPE…VFVPGASAWK (222 aa). The Ig-like V-type domain maps to 54–135; sequence EVEFPCHLWP…SDKGTYGCRF (82 aa). Cys59 and Cys133 are disulfide-bonded. N-linked (GlcNAc...) asparagine glycans are attached at residues Asn102, Asn139, and Asn224. The chain crosses the membrane as a helical span at residues 257-277; it reads SAFVATLPLLLVLAALALGVL. The stretch at 276–315 forms a coiled coil; the sequence is VLRKQRRSREKLRKQAEKRQEKLTAELEKLQTELDWRRAE. Over 278 to 535 the chain is Cytoplasmic; it reads RKQRRSREKL…EPADPALDWW (258 aa). In terms of domain architecture, B30.2/SPRY spans 310–509; the sequence is DWRRAEGQAE…LTICPLPVRG (200 aa). The disordered stretch occupies residues 340-367; it reads SLEVSEDGKSVSSRGAPPGPAPGHPQRF.

It belongs to the immunoglobulin superfamily. BTN/MOG family.

The protein resides in the membrane. The sequence is that of Butyrophilin-like protein 9 (BTNL9) from Homo sapiens (Human).